Here is a 261-residue protein sequence, read N- to C-terminus: Hydroxyethylthiazole kinase (261 aa).

Residue M39 coordinates substrate. The ATP site is built by R115 and T159. A substrate-binding site is contributed by G186.

Belongs to the Thz kinase family. The cofactor is Mg(2+).

The enzyme catalyses 5-(2-hydroxyethyl)-4-methylthiazole + ATP = 4-methyl-5-(2-phosphooxyethyl)-thiazole + ADP + H(+). Its pathway is cofactor biosynthesis; thiamine diphosphate biosynthesis; 4-methyl-5-(2-phosphoethyl)-thiazole from 5-(2-hydroxyethyl)-4-methylthiazole: step 1/1. Functionally, catalyzes the phosphorylation of the hydroxyl group of 4-methyl-5-beta-hydroxyethylthiazole (THZ). This chain is Hydroxyethylthiazole kinase, found in Macrococcus caseolyticus (strain JCSC5402) (Macrococcoides caseolyticum).